A 314-amino-acid polypeptide reads, in one-letter code: MQVTFLGTSSGVPTLNRNVSAMVLKPPQRSELWLFDCGEGTQHQFIRSNLKLSQIKKIFITHMHGDHIYGLPGLLASIGLAGSSSGIELYGPAPLKNFIDSCLYNSSSRLAYSLKFHRVENAANNKEILFEDSELEVKTAPLKHRIPSFAYRVNQKTRPGRFDIEKAKLKGIPPGPVYADLQRGEEVRLEDGRIFSGKEFCGPPRPGVSMVYCTDTVYTESAIEISRKADLLIHESTYSYKETEMAYERGHSTATMAAQIAAKANVDQLILTHLSPRYTPGNQTCPNDLLNEAKAIFPNTQLAKDFLQIDLNKS.

Zn(2+)-binding residues include His-62, His-64, Asp-66, His-67, His-144, Asp-215, and His-273. Asp-66 (proton acceptor) is an active-site residue.

The protein belongs to the RNase Z family. Homodimer. Zn(2+) serves as cofactor.

The catalysed reaction is Endonucleolytic cleavage of RNA, removing extra 3' nucleotides from tRNA precursor, generating 3' termini of tRNAs. A 3'-hydroxy group is left at the tRNA terminus and a 5'-phosphoryl group is left at the trailer molecule.. Zinc phosphodiesterase, which displays some tRNA 3'-processing endonuclease activity. Probably involved in tRNA maturation, by removing a 3'-trailer from precursor tRNA. This is Ribonuclease Z from Prochlorococcus marinus (strain NATL1A).